Consider the following 727-residue polypeptide: MAPPAKRARRGLVPPGYKYLGPGNSLDQGEPTNPSDAAAKEHDEAYAAYLRSGKNPYLYFSPADQRFIDQTKDATDWGGKIGHYFFRAKKAIAPVLTDTPDHPSTSRPTKPTKRSKPPPHIFINLAKKKKAGAGQVKRDNQAPMSDGAVQPDGGQPAVRNERATGSGNGSGGGGGGGSGGVGISTGTFNNQTEFKFLENGWVEITANSSRLVHLNMPESENYKRVVVNNMDKTAVKGNMALDDTHVQIVTPWSLVDANAWGVWFNPGDWQLIVNTMSELHLVSFEQEIFNVVLKTVSESATQPPTKVYNNDLTASLMVALDSNNTMPFTPAAMRSETLGFYPWKPTIPTPWRYYFQWDRTLIPSHTGTSGTPTNIYHGTDPDDVQFYTIENSVPVHLLRTGDEFATGTFFFDCKPCRLTHTWQTNRALGLPPFLNSLPQSEGATNFGDIGVQQDKRRGVTQMGNTDYITEATIMRPAEVGYSAPYYSFEASTQGPFKIPIAAGRGGAQTDENQAADGDPRYAFGRQHGQKTTTTGETPERFTYIAHQDTGRYPAGDWIQNINFNLPVTNDNVLLPTDPIGGKTGINYTNIFNTYGPLTALNNVPPVYPNGQIWDKEFDTDLKPRLHVNAPFVCQNNCPGQLFVKVAPNLTNEYDPDASANMSRIVTYSDFWWKGKLVFKAKLRASHTWNPIQQMSINVDNQFNYLPNNIGAMKIVYEKSQLAPRKLY.

Residues Met-1–Arg-10 show a composition bias toward basic residues. Disordered regions lie at residues Met-1–Ala-38 and Val-95–Ser-184. Positions Pro-4–Val-13 match the Nuclear localization signal motif. Residues Tyr-19 to Asp-64 form a phospholipase A2-like region. Over residues Ser-25–Ser-35 the composition is skewed to polar residues. Residues Ser-166–Ile-183 show a composition bias toward gly residues. Asn-323 provides a ligand contact to Mg(2+). The tract at residues Ala-507 to Glu-536 is disordered. Cys-633 and Cys-637 are oxidised to a cystine.

The protein belongs to the parvoviridae capsid protein family. As to quaternary structure, interacts with host TFRC.

The protein localises to the virion. Its subcellular location is the host nucleus. Capsid protein self-assembles to form an icosahedral capsid with a T=1 symmetry, about 22 nm in diameter, and consisting of 60 copies of two size variants of the capsid proteins, VP1 and VP2, which differ by the presence of an N-terminal extension in the minor protein VP1. The capsid encapsulates the genomic ssDNA. Capsid proteins are responsible for the attachment to host cell receptor TFRC. This attachment induces virion internalization predominantly through clathrin-dependent endocytosis. Binding to the host receptors also induces capsid rearrangements leading to surface exposure of VP1 N-terminus. The sequence is that of Capsid protein VP1 from Feline panleukopenia virus (FPV).